The following is a 190-amino-acid chain: Peptidyl-tRNA hydrolase (190 aa).

TRNA is bound at residue Tyr18. His23 acts as the Proton acceptor in catalysis. Phe67, Asn69, and Asn115 together coordinate tRNA.

It belongs to the PTH family. As to quaternary structure, monomer.

It is found in the cytoplasm. The enzyme catalyses an N-acyl-L-alpha-aminoacyl-tRNA + H2O = an N-acyl-L-amino acid + a tRNA + H(+). Functionally, hydrolyzes ribosome-free peptidyl-tRNAs (with 1 or more amino acids incorporated), which drop off the ribosome during protein synthesis, or as a result of ribosome stalling. Catalyzes the release of premature peptidyl moieties from peptidyl-tRNA molecules trapped in stalled 50S ribosomal subunits, and thus maintains levels of free tRNAs and 50S ribosomes. The polypeptide is Peptidyl-tRNA hydrolase (Leptospira interrogans serogroup Icterohaemorrhagiae serovar Lai (strain 56601)).